An 82-amino-acid polypeptide reads, in one-letter code: ATP synthase subunit c, chloroplastic (82 aa).

Helical transmembrane passes span 3–23 (PLICAASVVGAGLAIGLGAIG) and 57–77 (LAFMEALTIYGLVVALALMFA).

It belongs to the ATPase C chain family. In terms of assembly, F-type ATPases have 2 components, F(1) - the catalytic core - and F(0) - the membrane proton channel. F(1) has five subunits: alpha(3), beta(3), gamma(1), delta(1), epsilon(1). F(0) has four main subunits: a(1), b(1), b'(1) and c(10-14). The alpha and beta chains form an alternating ring which encloses part of the gamma chain. F(1) is attached to F(0) by a central stalk formed by the gamma and epsilon chains, while a peripheral stalk is formed by the delta, b and b' chains.

It localises to the plastid. It is found in the chloroplast thylakoid membrane. Functionally, f(1)F(0) ATP synthase produces ATP from ADP in the presence of a proton or sodium gradient. F-type ATPases consist of two structural domains, F(1) containing the extramembraneous catalytic core and F(0) containing the membrane proton channel, linked together by a central stalk and a peripheral stalk. During catalysis, ATP synthesis in the catalytic domain of F(1) is coupled via a rotary mechanism of the central stalk subunits to proton translocation. In terms of biological role, key component of the F(0) channel; it plays a direct role in translocation across the membrane. A homomeric c-ring of between 10-14 subunits forms the central stalk rotor element with the F(1) delta and epsilon subunits. This is ATP synthase subunit c, chloroplastic from Ostreococcus tauri.